The sequence spans 276 residues: Elongation factor Ts (276 aa).

The involved in Mg(2+) ion dislocation from EF-Tu stretch occupies residues 76-79 (TDFV).

This sequence belongs to the EF-Ts family.

It is found in the cytoplasm. Associates with the EF-Tu.GDP complex and induces the exchange of GDP to GTP. It remains bound to the aminoacyl-tRNA.EF-Tu.GTP complex up to the GTP hydrolysis stage on the ribosome. The chain is Elongation factor Ts from Mycobacterium leprae (strain Br4923).